The primary structure comprises 184 residues: NADH-quinone oxidoreductase subunit B (184 aa).

[4Fe-4S] cluster-binding residues include Cys37, Cys38, Cys103, and Cys132.

Belongs to the complex I 20 kDa subunit family. NDH-1 is composed of 14 different subunits. Subunits NuoB, C, D, E, F, and G constitute the peripheral sector of the complex. Requires [4Fe-4S] cluster as cofactor.

Its subcellular location is the cell membrane. The catalysed reaction is a quinone + NADH + 5 H(+)(in) = a quinol + NAD(+) + 4 H(+)(out). In terms of biological role, NDH-1 shuttles electrons from NADH, via FMN and iron-sulfur (Fe-S) centers, to quinones in the respiratory chain. The immediate electron acceptor for the enzyme in this species is believed to be a menaquinone. Couples the redox reaction to proton translocation (for every two electrons transferred, four hydrogen ions are translocated across the cytoplasmic membrane), and thus conserves the redox energy in a proton gradient. The sequence is that of NADH-quinone oxidoreductase subunit B from Mycolicibacterium gilvum (strain PYR-GCK) (Mycobacterium gilvum (strain PYR-GCK)).